The chain runs to 94 residues: Large ribosomal subunit protein bL28 (94 aa).

Residues 1–21 (MARRCEVTGRGTVSGNNVSHS) form a disordered region. A compositionally biased stretch (polar residues) spans 11–20 (GTVSGNNVSH).

It belongs to the bacterial ribosomal protein bL28 family.

This chain is Large ribosomal subunit protein bL28, found in Leptospira borgpetersenii serovar Hardjo-bovis (strain JB197).